The chain runs to 272 residues: Indole-3-glycerol phosphate synthase (272 aa).

Belongs to the TrpC family.

It catalyses the reaction 1-(2-carboxyphenylamino)-1-deoxy-D-ribulose 5-phosphate + H(+) = (1S,2R)-1-C-(indol-3-yl)glycerol 3-phosphate + CO2 + H2O. It functions in the pathway amino-acid biosynthesis; L-tryptophan biosynthesis; L-tryptophan from chorismate: step 4/5. This is Indole-3-glycerol phosphate synthase from Mycolicibacterium vanbaalenii (strain DSM 7251 / JCM 13017 / BCRC 16820 / KCTC 9966 / NRRL B-24157 / PYR-1) (Mycobacterium vanbaalenii).